The sequence spans 458 residues: Phosphoglucosamine mutase (458 aa).

Catalysis depends on Ser106, which acts as the Phosphoserine intermediate. Mg(2+) is bound by residues Ser106, Asp247, Asp249, and Asp251. Ser106 is modified (phosphoserine).

The protein belongs to the phosphohexose mutase family. It depends on Mg(2+) as a cofactor. In terms of processing, activated by phosphorylation.

The catalysed reaction is alpha-D-glucosamine 1-phosphate = D-glucosamine 6-phosphate. Catalyzes the conversion of glucosamine-6-phosphate to glucosamine-1-phosphate. The sequence is that of Phosphoglucosamine mutase from Chlamydia caviae (strain ATCC VR-813 / DSM 19441 / 03DC25 / GPIC) (Chlamydophila caviae).